Reading from the N-terminus, the 447-residue chain is Protein mab-21-like 4 (447 aa).

This is Protein mab-21-like 4 from Homo sapiens (Human).